A 95-amino-acid polypeptide reads, in one-letter code: Protein TusB (95 aa).

The protein belongs to the DsrH/TusB family. In terms of assembly, heterohexamer, formed by a dimer of trimers. The hexameric TusBCD complex contains 2 copies each of TusB, TusC and TusD. The TusBCD complex interacts with TusE.

It is found in the cytoplasm. Its function is as follows. Part of a sulfur-relay system required for 2-thiolation of 5-methylaminomethyl-2-thiouridine (mnm(5)s(2)U) at tRNA wobble positions. This chain is Protein TusB, found in Photorhabdus laumondii subsp. laumondii (strain DSM 15139 / CIP 105565 / TT01) (Photorhabdus luminescens subsp. laumondii).